The primary structure comprises 79 residues: Hematopoietic cell signal transducer (79 aa).

Positions 1–18 (MAPPGHLLFLFLLPVAAS) are cleaved as a signal peptide. Topologically, residues 19-35 (QTNEGSCSGCGPLSLPL) are extracellular. Residues 36–56 (LAGLVAADAVMSLLIVGVVFV) form a helical membrane-spanning segment. Residues 57–79 (CMRLHSRPAQEDGRVYINMPGRG) are Cytoplasmic-facing. At tyrosine 72 the chain carries Phosphotyrosine. The interval 72-74 (YIN) is GRB2 binding site. The tract at residues 72–75 (YINM) is PIK3R1 binding site.

Belongs to the DAP10 family. As to quaternary structure, homodimer; Disulfide-linked. Heterohexamer composed of four subunits of HCST/DAP10 and two subunits of KLRK1. Interacts (via transmembrane domain) with KLRK1 (via transmembrane domain); the interaction is required for KLRK1 NK cell surface and induces NK cell-mediated cytotoxicity. Interacts with PIK3R1 and GRB2. Interacts with CLEC5A. Forms an CLEC5A/TYROBP/HCST trimolecular complex depending almost solely on TYROBP. Interacts with CD300H. Phosphorylated; PIK3R1 and GRB2 associate specifically with tyrosine-phosphorylated HCST. Post-translationally, O-glycosylated.

The protein localises to the membrane. Its function is as follows. Transmembrane adapter protein which associates with KLRK1 to form an activation receptor KLRK1-HCST in lymphoid and myeloid cells; this receptor plays a major role in triggering cytotoxicity against target cells expressing cell surface ligands such as MHC class I chain-related MICA and MICB, and UL16-binding proteins (ULBPs); these ligands are up-regulated by stress conditions and pathological state such as viral infection and tumor transformation. Functions as a docking site for PI3-kinase PIK3R1 and GRB2. Interaction of ULBPs with KLRK1-HCST triggers calcium mobilization and activation of the PIK3R1, MAP2K/ERK, and JAK2/STAT5 signaling pathways. Both PIK3R1 and GRB2 are required for full KLRK1-HCST-mediated activation and ultimate killing of target cells. In NK cells, KLRK1-HCST signaling directly induces cytotoxicity and enhances cytokine production initiated via DAP12/TYROBP-associated receptors. In T-cells, it provides primarily costimulation for TCR-induced signals. KLRK1-HCST receptor plays a role in immune surveillance against tumors and is required for cytolysis of tumors cells; indeed, melanoma cells that do not express KLRK1 ligands escape from immune surveillance mediated by NK cells. The chain is Hematopoietic cell signal transducer (Hcst) from Rattus norvegicus (Rat).